A 177-amino-acid chain; its full sequence is Endoribonuclease YbeY (177 aa).

Zn(2+)-binding residues include histidine 118, histidine 122, and histidine 128.

The protein belongs to the endoribonuclease YbeY family. Zn(2+) is required as a cofactor.

The protein resides in the cytoplasm. In terms of biological role, single strand-specific metallo-endoribonuclease involved in late-stage 70S ribosome quality control and in maturation of the 3' terminus of the 16S rRNA. The polypeptide is Endoribonuclease YbeY (Mycobacterium bovis (strain ATCC BAA-935 / AF2122/97)).